The sequence spans 85 residues: Conotoxin Im28.1 (85 aa).

Residues 1–21 form the signal peptide; sequence MPKLEMMLLVLLILPLCYIDA. Positions 22–40 are excised as a propeptide; sequence VGPPPPWNMEDEIIEHWQK.

This sequence belongs to the conotoxin D superfamily. Contains 5 disulfide bonds. Expressed by the venom duct.

It is found in the secreted. Probable neurotoxin. In Conus imperialis (Imperial cone), this protein is Conotoxin Im28.1.